The chain runs to 431 residues: Adenylosuccinate synthetase (431 aa).

Residues 12–18 (GDEGKGK) and 40–42 (GHT) each bind GTP. Residue Asp13 is the Proton acceptor of the active site. Residues Asp13 and Gly40 each contribute to the Mg(2+) site. IMP contacts are provided by residues 13–16 (DEGK), 38–41 (NAGH), Thr128, Arg142, Gln223, Thr238, and Arg301. The active-site Proton donor is the His41. A substrate-binding site is contributed by 297–303 (TVTGRPR). GTP-binding positions include Arg303, 329 to 331 (SID), and 411 to 413 (SVG).

Belongs to the adenylosuccinate synthetase family. As to quaternary structure, homodimer. Requires Mg(2+) as cofactor.

The protein localises to the cytoplasm. The catalysed reaction is IMP + L-aspartate + GTP = N(6)-(1,2-dicarboxyethyl)-AMP + GDP + phosphate + 2 H(+). It functions in the pathway purine metabolism; AMP biosynthesis via de novo pathway; AMP from IMP: step 1/2. Functionally, plays an important role in the de novo pathway of purine nucleotide biosynthesis. Catalyzes the first committed step in the biosynthesis of AMP from IMP. This is Adenylosuccinate synthetase from Lacticaseibacillus paracasei (strain ATCC 334 / BCRC 17002 / CCUG 31169 / CIP 107868 / KCTC 3260 / NRRL B-441) (Lactobacillus paracasei).